The primary structure comprises 373 residues: tRNA (guanine(26)-N(2))-dimethyltransferase (373 aa).

The Trm1 methyltransferase domain occupies 2 to 365; that stretch reads KIISEGETKL…AELSDLVVLI (364 aa). S-adenosyl-L-methionine contacts are provided by R35, R66, D86, D113, and A114.

It belongs to the class I-like SAM-binding methyltransferase superfamily. Trm1 family.

It carries out the reaction guanosine(26) in tRNA + 2 S-adenosyl-L-methionine = N(2)-dimethylguanosine(26) in tRNA + 2 S-adenosyl-L-homocysteine + 2 H(+). Functionally, dimethylates a single guanine residue at position 26 of a number of tRNAs using S-adenosyl-L-methionine as donor of the methyl groups. This is tRNA (guanine(26)-N(2))-dimethyltransferase from Methanococcus maripaludis (strain C7 / ATCC BAA-1331).